The sequence spans 129 residues: D-ribose pyranase (129 aa).

The active-site Proton donor is His-20. Substrate is bound by residues Asp-28, His-96, and Tyr-118–Asn-120.

This sequence belongs to the RbsD / FucU family. RbsD subfamily. As to quaternary structure, homodecamer.

The protein localises to the cytoplasm. The catalysed reaction is beta-D-ribopyranose = beta-D-ribofuranose. The protein operates within carbohydrate metabolism; D-ribose degradation; D-ribose 5-phosphate from beta-D-ribopyranose: step 1/2. In terms of biological role, catalyzes the interconversion of beta-pyran and beta-furan forms of D-ribose. This is D-ribose pyranase from Staphylococcus haemolyticus (strain JCSC1435).